The primary structure comprises 1377 residues: DNA-directed RNA polymerase subunit beta (1377 aa).

This sequence belongs to the RNA polymerase beta chain family. As to quaternary structure, the RNAP catalytic core consists of 2 alpha, 1 beta, 1 beta' and 1 omega subunit. When a sigma factor is associated with the core the holoenzyme is formed, which can initiate transcription.

The enzyme catalyses RNA(n) + a ribonucleoside 5'-triphosphate = RNA(n+1) + diphosphate. Its function is as follows. DNA-dependent RNA polymerase catalyzes the transcription of DNA into RNA using the four ribonucleoside triphosphates as substrates. This is DNA-directed RNA polymerase subunit beta from Brucella suis biovar 1 (strain 1330).